A 465-amino-acid polypeptide reads, in one-letter code: 23S rRNA (uracil(1939)-C(5))-methyltransferase RlmD (465 aa).

Positions 1-22 are disordered; that stretch reads MSEAVPTSARKSKNAPVAPGPA. The TRAM domain maps to 16 to 80; it reads PVAPGPAPVL…PSYEQATVVD (65 aa). Residues Cys93, Cys99, Cys102, and Cys181 each contribute to the [4Fe-4S] cluster site. Positions 289, 318, 323, 339, 367, and 388 each coordinate S-adenosyl-L-methionine. Residue Cys421 is the Nucleophile of the active site.

The protein belongs to the class I-like SAM-binding methyltransferase superfamily. RNA M5U methyltransferase family. RlmD subfamily.

The enzyme catalyses uridine(1939) in 23S rRNA + S-adenosyl-L-methionine = 5-methyluridine(1939) in 23S rRNA + S-adenosyl-L-homocysteine + H(+). Its function is as follows. Catalyzes the formation of 5-methyl-uridine at position 1939 (m5U1939) in 23S rRNA. The sequence is that of 23S rRNA (uracil(1939)-C(5))-methyltransferase RlmD from Burkholderia ambifaria (strain ATCC BAA-244 / DSM 16087 / CCUG 44356 / LMG 19182 / AMMD) (Burkholderia cepacia (strain AMMD)).